A 98-amino-acid chain; its full sequence is Defensin (98 aa).

Disulfide bonds link Cys61–Cys88, Cys74–Cys94, and Cys78–Cys96.

This sequence belongs to the invertebrate defensin family. Type 1 subfamily.

This chain is Defensin, found in Mamestra brassicae (Cabbage moth).